The chain runs to 624 residues: tRNA uridine 5-carboxymethylaminomethyl modification enzyme MnmG (624 aa).

FAD-binding positions include 16–21, V128, and S183; that span reads GAGHAG. An NAD(+)-binding site is contributed by 275-289; that stretch reads GPRYCPSIEDKVVRF. An FAD-binding site is contributed by Q372.

Belongs to the MnmG family. Homodimer. Heterotetramer of two MnmE and two MnmG subunits. Requires FAD as cofactor.

The protein localises to the cytoplasm. NAD-binding protein involved in the addition of a carboxymethylaminomethyl (cmnm) group at the wobble position (U34) of certain tRNAs, forming tRNA-cmnm(5)s(2)U34. The chain is tRNA uridine 5-carboxymethylaminomethyl modification enzyme MnmG from Geobacter metallireducens (strain ATCC 53774 / DSM 7210 / GS-15).